Here is a 308-residue protein sequence, read N- to C-terminus: D-alanine--D-alanine ligase B (308 aa).

In terms of domain architecture, ATP-grasp spans 102-302 (KKVAAAAGVV…FAELLSWMVE (201 aa)). 128 to 183 (PMKPPYVVKPVREGSSFGVVIVKEDQPHPPQVIGSADWKYGDEVMVEGYIAGRELT) is an ATP binding site. Positions 252, 269, and 271 each coordinate Mg(2+).

The protein belongs to the D-alanine--D-alanine ligase family. Mg(2+) serves as cofactor. It depends on Mn(2+) as a cofactor.

The protein localises to the cytoplasm. It catalyses the reaction 2 D-alanine + ATP = D-alanyl-D-alanine + ADP + phosphate + H(+). The protein operates within cell wall biogenesis; peptidoglycan biosynthesis. Cell wall formation. This chain is D-alanine--D-alanine ligase B, found in Brucella suis biovar 1 (strain 1330).